The primary structure comprises 457 residues: tRNA-2-methylthio-N(6)-dimethylallyladenosine synthase (457 aa).

The MTTase N-terminal domain maps to 18–133 (KKLFIETYGC…LPELIASVEA (116 aa)). [4Fe-4S] cluster-binding residues include Cys-27, Cys-63, Cys-97, Cys-171, Cys-175, and Cys-178. Positions 157-390 (CGNHISGFVS…IALQNRLSAE (234 aa)) constitute a Radical SAM core domain. Residues 393–456 (NRCIGKTYEV…SATLKGEEVF (64 aa)) form the TRAM domain.

It belongs to the methylthiotransferase family. MiaB subfamily. Monomer. It depends on [4Fe-4S] cluster as a cofactor.

It localises to the cytoplasm. The enzyme catalyses N(6)-dimethylallyladenosine(37) in tRNA + (sulfur carrier)-SH + AH2 + 2 S-adenosyl-L-methionine = 2-methylsulfanyl-N(6)-dimethylallyladenosine(37) in tRNA + (sulfur carrier)-H + 5'-deoxyadenosine + L-methionine + A + S-adenosyl-L-homocysteine + 2 H(+). Catalyzes the methylthiolation of N6-(dimethylallyl)adenosine (i(6)A), leading to the formation of 2-methylthio-N6-(dimethylallyl)adenosine (ms(2)i(6)A) at position 37 in tRNAs that read codons beginning with uridine. This chain is tRNA-2-methylthio-N(6)-dimethylallyladenosine synthase, found in Bacteroides fragilis (strain ATCC 25285 / DSM 2151 / CCUG 4856 / JCM 11019 / LMG 10263 / NCTC 9343 / Onslow / VPI 2553 / EN-2).